We begin with the raw amino-acid sequence, 165 residues long: Protein-export protein SecB (165 aa).

This sequence belongs to the SecB family. In terms of assembly, homotetramer, a dimer of dimers. One homotetramer interacts with 1 SecA dimer.

The protein resides in the cytoplasm. One of the proteins required for the normal export of preproteins out of the cell cytoplasm. It is a molecular chaperone that binds to a subset of precursor proteins, maintaining them in a translocation-competent state. It also specifically binds to its receptor SecA. The protein is Protein-export protein SecB of Marinobacter nauticus (strain ATCC 700491 / DSM 11845 / VT8) (Marinobacter aquaeolei).